The chain runs to 253 residues: Sporulated oocyst TA4 antigen (253 aa).

The first 23 residues, M1 to A23, serve as a signal peptide directing secretion. Residues R182 to L184 constitute a propeptide, removed in mature form.

The TA4 antigen is composed of a 17 kDa and a 8 kDa chain, linked by a disulfide bond.

This is Sporulated oocyst TA4 antigen from Eimeria tenella (Coccidian parasite).